We begin with the raw amino-acid sequence, 376 residues long: Queuine tRNA-ribosyltransferase (376 aa).

Asp-90 (proton acceptor) is an active-site residue. Substrate contacts are provided by residues 90-94 (DSGGF), Asp-144, Gln-193, and Gly-220. Residues 251–257 (GVGTPED) form an RNA binding region. Residue Asp-270 is the Nucleophile of the active site. Residues 275-279 (TRNAR) are RNA binding; important for wobble base 34 recognition. 4 residues coordinate Zn(2+): Cys-308, Cys-310, Cys-313, and His-339.

It belongs to the queuine tRNA-ribosyltransferase family. Homodimer. Within each dimer, one monomer is responsible for RNA recognition and catalysis, while the other monomer binds to the replacement base PreQ1. The cofactor is Zn(2+).

It catalyses the reaction 7-aminomethyl-7-carbaguanine + guanosine(34) in tRNA = 7-aminomethyl-7-carbaguanosine(34) in tRNA + guanine. It participates in tRNA modification; tRNA-queuosine biosynthesis. Functionally, catalyzes the base-exchange of a guanine (G) residue with the queuine precursor 7-aminomethyl-7-deazaguanine (PreQ1) at position 34 (anticodon wobble position) in tRNAs with GU(N) anticodons (tRNA-Asp, -Asn, -His and -Tyr). Catalysis occurs through a double-displacement mechanism. The nucleophile active site attacks the C1' of nucleotide 34 to detach the guanine base from the RNA, forming a covalent enzyme-RNA intermediate. The proton acceptor active site deprotonates the incoming PreQ1, allowing a nucleophilic attack on the C1' of the ribose to form the product. After dissociation, two additional enzymatic reactions on the tRNA convert PreQ1 to queuine (Q), resulting in the hypermodified nucleoside queuosine (7-(((4,5-cis-dihydroxy-2-cyclopenten-1-yl)amino)methyl)-7-deazaguanosine). The protein is Queuine tRNA-ribosyltransferase of Cupriavidus necator (strain ATCC 17699 / DSM 428 / KCTC 22496 / NCIMB 10442 / H16 / Stanier 337) (Ralstonia eutropha).